Here is a 378-residue protein sequence, read N- to C-terminus: UDP-N-acetylglucosamine--N-acetylmuramyl-(pentapeptide) pyrophosphoryl-undecaprenol N-acetylglucosamine transferase (378 aa).

UDP-N-acetyl-alpha-D-glucosamine-binding positions include 14–16 (TGG), Asn-125, Arg-165, Ser-193, and Gln-293.

It belongs to the glycosyltransferase 28 family. MurG subfamily.

The protein localises to the cell inner membrane. The catalysed reaction is di-trans,octa-cis-undecaprenyl diphospho-N-acetyl-alpha-D-muramoyl-L-alanyl-D-glutamyl-meso-2,6-diaminopimeloyl-D-alanyl-D-alanine + UDP-N-acetyl-alpha-D-glucosamine = di-trans,octa-cis-undecaprenyl diphospho-[N-acetyl-alpha-D-glucosaminyl-(1-&gt;4)]-N-acetyl-alpha-D-muramoyl-L-alanyl-D-glutamyl-meso-2,6-diaminopimeloyl-D-alanyl-D-alanine + UDP + H(+). Its pathway is cell wall biogenesis; peptidoglycan biosynthesis. In terms of biological role, cell wall formation. Catalyzes the transfer of a GlcNAc subunit on undecaprenyl-pyrophosphoryl-MurNAc-pentapeptide (lipid intermediate I) to form undecaprenyl-pyrophosphoryl-MurNAc-(pentapeptide)GlcNAc (lipid intermediate II). This is UDP-N-acetylglucosamine--N-acetylmuramyl-(pentapeptide) pyrophosphoryl-undecaprenol N-acetylglucosamine transferase from Bartonella quintana (strain Toulouse) (Rochalimaea quintana).